A 288-amino-acid chain; its full sequence is Cell division protein ZipA (288 aa).

Residue methionine 1 is a topological domain, periplasmic. Residues 2–22 (EIGLREWLIVIGIIVIAGILF) form a helical membrane-spanning segment. Residues 23–288 (DGWRRMRGGK…FERRALTQKR (266 aa)) are Cytoplasmic-facing. 2 stretches are compositionally biased toward basic and acidic residues: residues 66–75 (KEPQLDEHDL) and 83–93 (REAREPRESGS). The tract at residues 66-141 (KEPQLDEHDL…AKSSPAVADK (76 aa)) is disordered. A compositionally biased stretch (low complexity) spans 106 to 117 (GDLNLDLDLDGG).

This sequence belongs to the ZipA family. In terms of assembly, interacts with FtsZ via their C-terminal domains.

Its subcellular location is the cell inner membrane. Its function is as follows. Essential cell division protein that stabilizes the FtsZ protofilaments by cross-linking them and that serves as a cytoplasmic membrane anchor for the Z ring. Also required for the recruitment to the septal ring of downstream cell division proteins. This is Cell division protein ZipA from Pseudomonas fluorescens (strain Pf0-1).